Here is a 280-residue protein sequence, read N- to C-terminus: Thioredoxin-related transmembrane protein 1 (280 aa).

The signal sequence occupies residues 1 to 26 (MAPSGSLAVPLAVLVLLLWGAPWTHG). Residues 27–132 (RRSNVRVITD…FINFISDKEW (106 aa)) form the Thioredoxin domain. The Extracellular segment spans residues 27-180 (RRSNVRVITD…EDLGLPVWGS (154 aa)). Residues Cys56 and Cys59 each act as nucleophile in the active site. A disulfide bond links Cys56 and Cys59. The helical transmembrane segment at 181-203 (YTVFALATLFSGLLLGLCMIFVA) threads the bilayer. Over 204–280 (DCLCPSKRRR…LGPSLATDKS (77 aa)) the chain is Cytoplasmic. S-palmitoyl cysteine attachment occurs at residues Cys205 and Cys207. A disordered region spans residues 218 to 280 (PYPSKKLLSE…LGPSLATDKS (63 aa)). Residues Ser228, Ser247, Ser270, Ser274, and Ser280 each carry the phosphoserine modification. Positions 237–252 (EEQEADEEDVSEEEAE) are enriched in acidic residues.

As to quaternary structure, interacts with ATP2A2. Palmitoylated; palmitoylation is required for localization to mitochondria-associated endoplasmic reticulum membrane (MAM). As to expression, ubiquitous. Highly expressed in kidney, liver, placenta and lung.

The protein localises to the endoplasmic reticulum membrane. Its subcellular location is the mitochondrion membrane. It is found in the secreted. It carries out the reaction Catalyzes the rearrangement of -S-S- bonds in proteins.. Functionally, thiredoxin domain-containing protein that participates in various redox reactions through the reversible oxidation of its active center dithiol to a disulfide and catalyze dithiol-disulfide exchange reactions. Acts as a key inhibitor of the alternative triglyceride biosynthesis pathway by inhibiting the activity of TMEM68/DIESL at the endoplasmic reticulum, thereby restricting accumulation of triacylglycerol. The alternative triglyceride biosynthesis pathway mediates formation of triacylglycerol from diacylglycerol and membrane phospholipids. Acts as a protein disulfide isomerase by catalyzing formation or reduction of disulfide bonds. Specifically mediates formation of disulfide bonds of transmembrane proteins at the endoplasmic reticulum membrane. Involved in endoplasmic reticulum-associated degradation (ERAD) via its protein disulfide isomerase activity by acting on folding-defective polypeptides at the endoplasmic reticulum membrane. Acts as a negative regulator of platelet aggregation following secretion in the extracellular space. Acts as a regulator of endoplasmic reticulum-mitochondria contact sites via its ability to regulate redox signals. Regulates endoplasmic reticulum-mitochondria Ca(2+) flux. The protein is Thioredoxin-related transmembrane protein 1 of Homo sapiens (Human).